The chain runs to 140 residues: Gonadotropin subunit beta-2 (140 aa).

A signal peptide spans 1-24 (MSVYPECTWLLFVCLCHLLVSAGG). Cystine bridges form between Cys-30–Cys-78, Cys-44–Cys-93, Cys-47–Cys-131, Cys-55–Cys-109, Cys-59–Cys-111, and Cys-114–Cys-121. A glycan (N-linked (GlcNAc...) asparagine) is linked at Asn-34.

Belongs to the glycoprotein hormones subunit beta family. Heterodimer of an alpha and a beta chain.

The protein resides in the secreted. Functionally, involved in gametogenesis and steroidogenesis. This is Gonadotropin subunit beta-2 (cgbb) from Anguilla anguilla (European freshwater eel).